We begin with the raw amino-acid sequence, 59 residues long: Photosystem II reaction center protein K (59 aa).

Positions 1–22 (MLNIFSLICLNSALYPSSLFFA) are excised as a propeptide. A helical transmembrane segment spans residues 38-58 (MPVIPLFFFLLAFVWQAAVSF).

It belongs to the PsbK family. As to quaternary structure, PSII is composed of 1 copy each of membrane proteins PsbA, PsbB, PsbC, PsbD, PsbE, PsbF, PsbH, PsbI, PsbJ, PsbK, PsbL, PsbM, PsbT, PsbX, PsbY, PsbZ, Psb30/Ycf12, at least 3 peripheral proteins of the oxygen-evolving complex and a large number of cofactors. It forms dimeric complexes.

The protein resides in the plastid. The protein localises to the chloroplast thylakoid membrane. Functionally, one of the components of the core complex of photosystem II (PSII). PSII is a light-driven water:plastoquinone oxidoreductase that uses light energy to abstract electrons from H(2)O, generating O(2) and a proton gradient subsequently used for ATP formation. It consists of a core antenna complex that captures photons, and an electron transfer chain that converts photonic excitation into a charge separation. The protein is Photosystem II reaction center protein K of Lactuca sativa (Garden lettuce).